The sequence spans 2474 residues: Polyprotein P1234 (2474 aa).

Residues 28-259 (EPRQVTPNDH…ESRKLLKSWH (232 aa)) enclose the Alphavirus-like MT domain. The active-site For mRNA-capping enzyme nsP1 activity is the H37. Zn(2+) is bound by residues H79, E129, C134, and C141. Residues 295–450 (GLYGKTTGYA…QKVQAEFDSF (156 aa)) are membrane-binding and oligomerization. Residues C417 and C419 are each lipidated (S-palmitoyl cysteine; by host). Residues 482-502 (PYSGDAQEARDAEKEAEEERE) form a disordered region. The region spanning 690-842 (DLTNPPYHEF…HNICTQVYHK (153 aa)) is the (+)RNA virus helicase ATP-binding domain. 721–728 (GVPGSGKS) is a binding site for a ribonucleoside 5'-triphosphate. The (+)RNA virus helicase C-terminal domain maps to 843–991 (SISRRCTLPV…IKEWEVEHAS (149 aa)). The 324-residue stretch at 1004–1327 (DTFQNKANVC…NQLNAAFVGQ (324 aa)) folds into the Peptidase C9 domain. Residues 1005–1024 (TFQNKANVCWAKSLVPILET) are nucleolus localization signal. C1013 (for cysteine protease nsP2 activity) is an active-site residue. The Nuclear export signal signature appears at 1058–1067 (TRMYGVDLDS). H1083 (for cysteine protease nsP2 activity) is an active-site residue. Positions 1182–1186 (PTKRV) match the Nuclear localization signal motif. In terms of domain architecture, Macro spans 1334–1493 (APSYRVKRMD…KISEAIQMRT (160 aa)). ADP-D-ribose is bound by residues D1343, N1357, G1365, G1445, V1446, and Y1447. Residues C1595, C1597, C1620, and C1638 each contribute to the Zn(2+) site. Positions 1651-1672 (RVSPREYRPSQESVQEASTTTS) are disordered. The segment at 1659-1857 (PSQESVQEAS…TCSDTDDELR (199 aa)) is HVD. Positions 1660–1672 (SQESVQEASTTTS) are enriched in polar residues. Interaction with host CD2AP stretches follow at residues 1726 to 1739 (VMST…RRRR) and 1756 to 1767 (PMASVRFFRAEL). Residues 1745–1793 (VTCDEREGNITPMASVRFFRAELCPVVQETAETRDTAMSLQAPPSTATE) form an interaction with host FHL1 region. The short motif at 1812-1815 (FGDF) is the FGDF; binding to host G3BP1 element. The interval 1820-1828 (IESLSSELL) is interaction with host CD2AP. An FGDF; binding to host G3BP1 motif is present at residues 1830 to 1833 (FGDF). The RdRp catalytic domain occupies 2228-2343 (DTVLETDIAS…HGVVSDELMA (116 aa)).

In terms of assembly, homododecamer. The enzyme forms a membrane-associated dodecameric ring with a central channel for the exchange of between the viral replication factories and the host cytoplasm. Interacts with non-structural protein 3. Interacts with RNA-directed RNA polymerase nsP4. Interacts with protease nsP2. Interacts with itself. Interacts with host STING1; this interaction results in inhibition of cGAS-STING signaling and increased levels of palmitoylation and protein stabilization of nsP1. Interacts with host TMEM45B; this interaction leads to viral replication inhibition. Interacts with mRNA-capping enzyme nsP1. Interacts (via C-terminus) with host G3BP1; this interaction inhibits the formation of host stress granules on viral mRNAs and the nsp3-G3BP1 complexes bind viral RNAs and probably orchestrate the assembly of viral replication complexes. Interacts (via C-terminus) with host G3BP2; this interaction inhibits the formation of host stress granules on viral mRNAs and the nsp3-G3BP2 complexes bind viral RNAs and probably orchestrate the assembly of viral replication complexes. Interacts (via C-terminus) with host NAP1L1. Interacts (via C-terminus) with host NAP1L4. Interacts (via C-terminus) with host DHX9; this interaction allows the recruitment of DHX9 to the plasma membrane, where it associates with viral replication complexes and may play a role in the translation-to-replication switch. Interacts (via C-terminus) with host FHL1 (via LIM domain 1); this interaction is required for viral RNA replication. Interacts (via C-terminus) with host CD2AP; this interaction plays a role in initiation of viral replication. Interacts (via C-terminus) with host SH3KBP1; this interaction plays a role in initiation of viral replication. As to quaternary structure, interacts with mRNA-capping enzyme nsP1. Interacts with protease nsP2. interacts with itself. Interacts with host TMEM45B; this interaction leads to viral replication inhibition. In terms of assembly, interacts with RNA-directed RNA polymerase nsP4. Interacts with mRNA-capping enzyme nsP1. Interacts with KPNA1/karyopherin-alpha1; this interaction probably allows the active transport of protease nsP2 into the host nucleus. Requires Mg(2+) as cofactor. The cofactor is Mn(2+). In terms of processing, specific enzymatic cleavages in vivo yield mature proteins. The processing of the polyprotein is temporally regulated. In early stages (1.7 hpi), P1234 is first cleaved in trans through its nsP2 protease activity, releasing P123 and nsP4, which associate to form the early replication complex. At the same time, P1234 is also cut at the nsP1/nsP2 site early in infection but with lower efficiency. After replication of the viral minus-strand RNAs (4 hpi), the polyproteins are cut at the nsP1/nsP2 and nsP2/nsP3 sites very efficiently, preventing accumulation of P123 and P1234 and allowing the formation of the late replication complex. NsP3/nsP4 site is not cleaved anymore and P34 is produced rather than nsP4. Specific enzymatic cleavages in vivo yield mature proteins. The processing of the polyprotein is temporally regulated. In early stages (1.7 hpi), P123 is cleaved at the nsP1/nsP2 site with low efficiency. After replication of the viral minus-strand RNAs (4 hpi), the polyproteins are cut at the nsP1/nsP2 and nsP2/nsP3 sites very efficiently, preventing accumulation of P123 and allowing the formation of the late replication complex. Post-translationally, palmitoylated by host palmitoyltransferases ZDHHC2 and ZDHHC19. Palmitoylation is increased by the interacton with host STING1. In terms of processing, phosphorylated by host on serines and threonines. Ubiquitinated; targets the protein for rapid degradation via the ubiquitin system. Nsp4 is present in extremely low quantities due to low frequency of translation through the amber stop-codon and the degradation by the ubiquitin pathway.

It localises to the host cytoplasmic vesicle membrane. The protein localises to the host cell membrane. The protein resides in the host cell projection. Its subcellular location is the host filopodium. It is found in the host nucleus. It localises to the host cytoplasm. It catalyses the reaction GTP + S-adenosyl-L-methionine = N(7)-methyl-GTP + S-adenosyl-L-homocysteine. The catalysed reaction is N(7)-methyl-GTP + L-histidyl-[protein] = N(tele)-(N(7)-methylguanosine 5'-phospho)-L-histidyl-[protein] + diphosphate. It carries out the reaction N(tele)-(N(7)-methylguanosine 5'-phospho)-L-histidyl-[protein] + a 5'-end diphospho-(purine-ribonucleoside) in mRNA + H(+) = a 5'-end (N(7)-methyl 5'-triphosphoguanosine)-(purine-ribonucleoside) in mRNA + L-histidyl-[protein]. The enzyme catalyses a 5'-end triphospho-ribonucleoside in mRNA + H2O = a 5'-end diphospho-ribonucleoside in mRNA + phosphate + H(+). It catalyses the reaction a ribonucleoside 5'-triphosphate + H2O = a ribonucleoside 5'-diphosphate + phosphate + H(+). The catalysed reaction is ATP + H2O = ADP + phosphate + H(+). It carries out the reaction RNA(n) + a ribonucleoside 5'-triphosphate = RNA(n+1) + diphosphate. The enzyme catalyses 4-O-(ADP-D-ribosyl)-L-aspartyl-[protein] + H2O = L-aspartyl-[protein] + ADP-D-ribose + H(+). It catalyses the reaction 5-O-(ADP-D-ribosyl)-L-glutamyl-[protein] + H2O = L-glutamyl-[protein] + ADP-D-ribose + H(+). The catalysed reaction is RNA(n) + ATP = RNA(n)-3'-adenine ribonucleotide + diphosphate. It carries out the reaction ADP-alpha-D-ribose 1''-phosphate + H2O = ADP-D-ribose + phosphate. Inactive precursor of the viral replicase, which is activated by cleavages carried out by the viral protease nsP2. Its function is as follows. The early replication complex formed by the polyprotein P123 and nsP4 synthesizes minus-strand RNAs. As soon P123 is cleaved into mature proteins, the plus-strand RNAs synthesis begins. Functionally, cytoplasmic capping enzyme that catalyzes two virus-specific reactions: methyltransferase and guanylyltransferase. mRNA-capping is necessary since all viral RNAs are synthesized in the cytoplasm, and host capping enzymes are restricted to the nucleus. The enzymatic reaction involves a covalent link between 7-methyl-GMP and nsP1, whereas eukaryotic capping enzymes form a covalent complex only with GMP. nsP1 capping consists in the following reactions: GTP is first methylated into 7-methyl-GMP and then is covalently linked to nsP1 to form the m7GMp-nsP1 complex from which 7-methyl-GMP complex is transferred to the mRNA to create the cap structure. NsP1 is also needed for the initiation of the minus-strand RNAs synthesis. At the initiation of virus replication, mediates the assembly of the viral replication complex made of the non-structural proteins, the association of this complex with the inner face of the plasma membrane and the formation of membranous spherules that serve as replication complex factories. Forms the neck of these spherules with a central channel for mediating communication and the passage of RNA, nucleotides, and small proteins between the viral replication complex and the host cytoplasm. Palmitoylated nsP1 is remodeling host cell cytoskeleton, and induces filopodium-like structure formation at the surface of the host cell. In terms of biological role, multifunctional protein whose N-terminus is part of the RNA polymerase complex and displays NTPase, RNA triphosphatase and helicase activities. NTPase and RNA triphosphatase are involved in viral RNA capping and helicase keeps a check on the dsRNA replication intermediates. The C-terminus harbors a protease that specifically cleaves the polyproteins and releases the mature proteins. Required for the shutoff of minus-strand RNAs synthesis. Specifically inhibits the host IFN response by promoting the nuclear export of host STAT1. Also inhibits host transcription by inducing the rapid proteasome-dependent degradation of POLR2A, a catalytic subunit of the RNAPII complex. The resulting inhibition of cellular protein synthesis serves to ensure maximal viral gene expression and to evade host immune response. Seems to be essential for minus-strand RNAs and subgenomic 26S mRNAs synthesis. Displays mono-ADP-ribosylhydrolase activity. ADP-ribosylation is a post-translational modification that controls various processes of the host cell and the virus probably needs to revert it for optimal viral replication. Binds proteins of G3BP family and sequesters them into the viral RNA replication complexes thereby inhibiting the formation of host stress granules on viral mRNAs. The nsp3-G3BP complexes bind viral RNAs and probably orchestrate the assembly of viral replication complexes, thanks to the ability of G3BP family members to self-assemble and bind DNA. Its function is as follows. RNA dependent RNA polymerase. Replicates genomic and antigenomic RNA by recognizing replications specific signals. The early replication complex formed by the polyprotein P123 and nsP4 synthesizes minus-strand RNAs. The late replication complex composed of fully processed nsP1-nsP4 is responsible for the production of genomic and subgenomic plus-strand RNAs. The chain is Polyprotein P1234 from Chikungunya virus (strain S27-African prototype) (CHIKV).